Reading from the N-terminus, the 1706-residue chain is Probable ATP-dependent RNA helicase DDX60-like (1706 aa).

The interval 545 to 580 is disordered; it reads RPKEDSSGASGEILQNTKPHQITKKSKKKSFLKEDQ. A compositionally biased stretch (polar residues) spans 551–564; it reads SGASGEILQNTKPH. Residues 565–574 are compositionally biased toward basic residues; the sequence is QITKKSKKKS. The 168-residue stretch at 752 to 919 folds into the Helicase ATP-binding domain; that stretch reads LDVVDKNESA…WLQSVKQYWK (168 aa). ATP is bound at residue 765 to 772; it reads APTSSGKT. A DEAH box motif is present at residues 869 to 872; the sequence is DEVH. One can recognise a Helicase C-terminal domain in the interval 1205–1354; sequence DVKALHTEIT…QFPLSITLVL (150 aa).

The protein belongs to the helicase family.

The catalysed reaction is ATP + H2O = ADP + phosphate + H(+). The polypeptide is Probable ATP-dependent RNA helicase DDX60-like (Homo sapiens (Human)).